Reading from the N-terminus, the 197-residue chain is Holliday junction branch migration complex subunit RuvA (197 aa).

The domain I stretch occupies residues 1 to 61 (MYEYFEGTIT…ENGMTLYGFK (61 aa)). Residues 62 to 140 (SQQDKVLFNK…NYVAENLFTE (79 aa)) are domain II. The interval 141–150 (DEPVESVFPA) is flexible linker. Positions 150-197 (ALEDALLALGALGYSQKEVDRIKPKLKKLPEMSADEYIKQGLGFLLKK) are domain III.

The protein belongs to the RuvA family. Homotetramer. Forms an RuvA(8)-RuvB(12)-Holliday junction (HJ) complex. HJ DNA is sandwiched between 2 RuvA tetramers; dsDNA enters through RuvA and exits via RuvB. An RuvB hexamer assembles on each DNA strand where it exits the tetramer. Each RuvB hexamer is contacted by two RuvA subunits (via domain III) on 2 adjacent RuvB subunits; this complex drives branch migration. In the full resolvosome a probable DNA-RuvA(4)-RuvB(12)-RuvC(2) complex forms which resolves the HJ.

Its subcellular location is the cytoplasm. Functionally, the RuvA-RuvB-RuvC complex processes Holliday junction (HJ) DNA during genetic recombination and DNA repair, while the RuvA-RuvB complex plays an important role in the rescue of blocked DNA replication forks via replication fork reversal (RFR). RuvA specifically binds to HJ cruciform DNA, conferring on it an open structure. The RuvB hexamer acts as an ATP-dependent pump, pulling dsDNA into and through the RuvAB complex. HJ branch migration allows RuvC to scan DNA until it finds its consensus sequence, where it cleaves and resolves the cruciform DNA. The polypeptide is Holliday junction branch migration complex subunit RuvA (Lactobacillus delbrueckii subsp. bulgaricus (strain ATCC BAA-365 / Lb-18)).